Here is a 247-residue protein sequence, read N- to C-terminus: Pyridoxine 5'-phosphate synthase (247 aa).

Residue Asn-12 participates in 3-amino-2-oxopropyl phosphate binding. 14–15 is a binding site for 1-deoxy-D-xylulose 5-phosphate; it reads DH. Arg-23 is a 3-amino-2-oxopropyl phosphate binding site. The Proton acceptor role is filled by His-48. Positions 50 and 55 each coordinate 1-deoxy-D-xylulose 5-phosphate. Glu-75 (proton acceptor) is an active-site residue. Residue Thr-105 coordinates 1-deoxy-D-xylulose 5-phosphate. His-196 acts as the Proton donor in catalysis. Residues Gly-197 and 218–219 contribute to the 3-amino-2-oxopropyl phosphate site; that span reads GH.

The protein belongs to the PNP synthase family. As to quaternary structure, homooctamer; tetramer of dimers.

Its subcellular location is the cytoplasm. It carries out the reaction 3-amino-2-oxopropyl phosphate + 1-deoxy-D-xylulose 5-phosphate = pyridoxine 5'-phosphate + phosphate + 2 H2O + H(+). The protein operates within cofactor biosynthesis; pyridoxine 5'-phosphate biosynthesis; pyridoxine 5'-phosphate from D-erythrose 4-phosphate: step 5/5. In terms of biological role, catalyzes the complicated ring closure reaction between the two acyclic compounds 1-deoxy-D-xylulose-5-phosphate (DXP) and 3-amino-2-oxopropyl phosphate (1-amino-acetone-3-phosphate or AAP) to form pyridoxine 5'-phosphate (PNP) and inorganic phosphate. The polypeptide is Pyridoxine 5'-phosphate synthase (Pseudomonas fluorescens (strain SBW25)).